The following is a 51-amino-acid chain: Insulin (51 aa).

3 cysteine pairs are disulfide-bonded: Cys7-Cys37, Cys19-Cys50, and Cys36-Cys41.

The protein belongs to the insulin family. As to quaternary structure, heterodimer of a B chain and an A chain linked by two disulfide bonds.

It localises to the secreted. In terms of biological role, insulin decreases blood glucose concentration. It increases cell permeability to monosaccharides, amino acids and fatty acids. It accelerates glycolysis, the pentose phosphate cycle, and glycogen synthesis in liver. This Didelphis virginiana (North American opossum) protein is Insulin (INS).